The primary structure comprises 110 residues: DNA-directed RNA polymerase subunit omega (110 aa).

Belongs to the RNA polymerase subunit omega family. As to quaternary structure, the RNAP catalytic core consists of 2 alpha, 1 beta, 1 beta' and 1 omega subunit. When a sigma factor is associated with the core the holoenzyme is formed, which can initiate transcription.

The catalysed reaction is RNA(n) + a ribonucleoside 5'-triphosphate = RNA(n+1) + diphosphate. In terms of biological role, promotes RNA polymerase assembly. Latches the N- and C-terminal regions of the beta' subunit thereby facilitating its interaction with the beta and alpha subunits. The polypeptide is DNA-directed RNA polymerase subunit omega (Nocardioides sp. (strain ATCC BAA-499 / JS614)).